The sequence spans 488 residues: 3-octaprenyl-4-hydroxybenzoate carboxy-lyase (488 aa).

Residue N172 coordinates Mn(2+). Residues 175–177, 189–191, and 194–195 contribute to the prenylated FMN site; these read IYR, RWL, and RG. A Mn(2+)-binding site is contributed by E238. The active-site Proton donor is D287.

This sequence belongs to the UbiD family. In terms of assembly, homohexamer. The cofactor is prenylated FMN. Mn(2+) is required as a cofactor.

Its subcellular location is the cell membrane. The catalysed reaction is a 4-hydroxy-3-(all-trans-polyprenyl)benzoate + H(+) = a 2-(all-trans-polyprenyl)phenol + CO2. The protein operates within cofactor biosynthesis; ubiquinone biosynthesis. Catalyzes the decarboxylation of 3-octaprenyl-4-hydroxy benzoate to 2-octaprenylphenol, an intermediate step in ubiquinone biosynthesis. The polypeptide is 3-octaprenyl-4-hydroxybenzoate carboxy-lyase (Pseudomonas savastanoi pv. phaseolicola (strain 1448A / Race 6) (Pseudomonas syringae pv. phaseolicola (strain 1448A / Race 6))).